The chain runs to 240 residues: Uridylate kinase (240 aa).

12-15 provides a ligand contact to ATP; that stretch reads KLSG. Residue glycine 54 participates in UMP binding. The ATP site is built by glycine 55 and arginine 59. UMP contacts are provided by residues aspartate 74 and 135-142; that span reads TGNPFFTT. Residues threonine 162, tyrosine 168, and aspartate 171 each contribute to the ATP site.

Belongs to the UMP kinase family. Homohexamer.

The protein localises to the cytoplasm. The catalysed reaction is UMP + ATP = UDP + ADP. Its pathway is pyrimidine metabolism; CTP biosynthesis via de novo pathway; UDP from UMP (UMPK route): step 1/1. With respect to regulation, inhibited by UTP. Catalyzes the reversible phosphorylation of UMP to UDP. The protein is Uridylate kinase of Xanthomonas euvesicatoria pv. vesicatoria (strain 85-10) (Xanthomonas campestris pv. vesicatoria).